We begin with the raw amino-acid sequence, 340 residues long: Protein RecA (340 aa).

Residue 65–72 (GPESGGKT) participates in ATP binding.

Belongs to the RecA family.

It is found in the cytoplasm. In terms of biological role, can catalyze the hydrolysis of ATP in the presence of single-stranded DNA, the ATP-dependent uptake of single-stranded DNA by duplex DNA, and the ATP-dependent hybridization of homologous single-stranded DNAs. It interacts with LexA causing its activation and leading to its autocatalytic cleavage. The polypeptide is Protein RecA (Thermus thermophilus).